We begin with the raw amino-acid sequence, 140 residues long: 3-hydroxyacyl-[acyl-carrier-protein] dehydratase FabZ (140 aa).

His48 is an active-site residue.

Belongs to the thioester dehydratase family. FabZ subfamily.

The protein localises to the cytoplasm. It catalyses the reaction a (3R)-hydroxyacyl-[ACP] = a (2E)-enoyl-[ACP] + H2O. In terms of biological role, involved in unsaturated fatty acids biosynthesis. Catalyzes the dehydration of short chain beta-hydroxyacyl-ACPs and long chain saturated and unsaturated beta-hydroxyacyl-ACPs. This Halalkalibacterium halodurans (strain ATCC BAA-125 / DSM 18197 / FERM 7344 / JCM 9153 / C-125) (Bacillus halodurans) protein is 3-hydroxyacyl-[acyl-carrier-protein] dehydratase FabZ.